A 287-amino-acid polypeptide reads, in one-letter code: Thymidylate synthase (287 aa).

Arg-21 provides a ligand contact to dUMP. His-51 lines the (6R)-5,10-methylene-5,6,7,8-tetrahydrofolate pocket. 150-151 lines the dUMP pocket; the sequence is RR. The active-site Nucleophile is the Cys-170. Residues 190–193, Asn-201, and 231–233 each bind dUMP; these read RSGD and HIY. (6R)-5,10-methylene-5,6,7,8-tetrahydrofolate is bound at residue Asp-193. Ala-286 is a binding site for (6R)-5,10-methylene-5,6,7,8-tetrahydrofolate.

It belongs to the thymidylate synthase family. Bacterial-type ThyA subfamily. In terms of assembly, homodimer.

The protein resides in the cytoplasm. The catalysed reaction is dUMP + (6R)-5,10-methylene-5,6,7,8-tetrahydrofolate = 7,8-dihydrofolate + dTMP. Its pathway is pyrimidine metabolism; dTTP biosynthesis. Functionally, catalyzes the reductive methylation of 2'-deoxyuridine-5'-monophosphate (dUMP) to 2'-deoxythymidine-5'-monophosphate (dTMP) while utilizing 5,10-methylenetetrahydrofolate (mTHF) as the methyl donor and reductant in the reaction, yielding dihydrofolate (DHF) as a by-product. This enzymatic reaction provides an intracellular de novo source of dTMP, an essential precursor for DNA biosynthesis. The protein is Thymidylate synthase of Mycoplasma pneumoniae (strain ATCC 29342 / M129 / Subtype 1) (Mycoplasmoides pneumoniae).